Reading from the N-terminus, the 453-residue chain is Septin-10 (453 aa).

A disordered region spans residues 18–43 (KTAHTSSQVSDHEQKQKDSPRSLTMS). Over residues 27-37 (SDHEQKQKDSP) the composition is skewed to basic and acidic residues. One can recognise a Septin-type G domain in the interval 62-328 (QGFCFNILCV…ELYRRRKLEE (267 aa)). A G1 motif region spans residues 72 to 79 (GETGIGKS). GTP contacts are provided by residues 72 to 79 (GETGIGKS), Gly-127, 208 to 216 (KADAISKTE), Gly-262, and Arg-277. The G3 motif stretch occupies residues 124–127 (NTVG). Residues 207–210 (AKAD) form a G4 motif region. The tract at residues 433-453 (TFMTPGSNLRKDKDRKNSNFM) is disordered. A compositionally biased stretch (basic and acidic residues) spans 441–453 (LRKDKDRKNSNFM).

The protein belongs to the TRAFAC class TrmE-Era-EngA-EngB-Septin-like GTPase superfamily. Septin GTPase family. Septins polymerize into heterooligomeric protein complexes that form filaments, and can associate with cellular membranes, actin filaments and microtubules. GTPase activity is required for filament formation. Interacts with ADGB. Proteolytically cleaved in vitro in a calmodulin-dependent manner.

It is found in the cytoplasm. The protein localises to the cytoskeleton. Its subcellular location is the cell projection. The protein resides in the cilium. It localises to the flagellum. In terms of biological role, filament-forming cytoskeletal GTPase. May play a role in cytokinesis (Potential). The chain is Septin-10 from Bos taurus (Bovine).